Reading from the N-terminus, the 603-residue chain is MSCGNEFVETLKKIGYPKADNLNGEDFDWLFEGVEDESFLKWFCGNVNEQNVLSERELEAFSILQKSGKPILEGAALDEALKTCKTSDLKTPRLDDKELEKLEDEVQTLLKLKNLKIQRRNKCQLMASVTSHKSLRLNAKEEEATKKLKQSQGILNAMITKISNELQALTDEVTQLMMFFRHSNLGQGTNPLVFLSQFSLEKYLSQEEQSTAALTLYTKKQFFQGIHEVVESSNEDNFQLLDIQTPSICDNQEILEERRLEMARLQLAYICAQHQLIHLKASNSSMKSSIKWAEESLHSLTSKAVDKENLDAKISSLTSEIMKLEKEVTQIKDRSLPAVVRENAQLLNMPVVKGDFDLQIAKQDYYTARQELVLNQLIKQKASFELLQLSYEIELRKHRDIYRQLENLVQELSQSNMMLYKQLEMLTDPSVSQQINPRNTIDTKDYSTHRLYQVLEGENKKKELFLTHGNLEEVAEKLKQNISLVQDQLAVSAQEHSFFLSKRNKDVDMLCDTLYQGGNQLLLSDQELTEQFHKVESQLNKLNHLLTDILADVKTKRKTLANNKLHQMEREFYVYFLKDEDYLKDIVENLETQSKIKAVSLED.

Ser-2 bears the N-acetylserine mark. Coiled coils occupy residues 93-177, 305-336, 389-426, and 458-495; these read RLDD…TQLM, VDKE…DRSL, LSYE…LEML, and ENKK…SAQE.

It belongs to the HAUS3 family. In terms of assembly, component of the HAUS augmin-like complex. The complex interacts with the gamma-tubulin ring complex and this interaction is required for spindle assembly. Interacts with EML3 (phosphorylated at 'Thr-881').

The protein localises to the cytoplasm. It localises to the cytoskeleton. It is found in the microtubule organizing center. The protein resides in the centrosome. Its subcellular location is the spindle. In terms of biological role, contributes to mitotic spindle assembly, maintenance of centrosome integrity and completion of cytokinesis as part of the HAUS augmin-like complex. This Homo sapiens (Human) protein is HAUS augmin-like complex subunit 3 (HAUS3).